The primary structure comprises 599 residues: Sulfite reductase [NADPH] flavoprotein alpha-component (599 aa).

Residues 64-202 (VTLISASQTG…AASEWRARVV (139 aa)) enclose the Flavodoxin-like domain. FMN is bound by residues 70–75 (SQTGNA), 117–120 (STQG), and 153–162 (LGDTSYEFFC). An FAD-binding FR-type domain is found at 234 to 448 (DAPLIATLSV…IEHNDNFRLP (215 aa)). Residues Thr322, Ala356, 386 to 389 (RLYS), 404 to 406 (TVG), Tyr410, and 419 to 422 (GGAS) each bind FAD. NADP(+) is bound by residues 519–520 (SR), 525–529 (KIYVQ), and Asp561. Tyr599 contributes to the FAD binding site.

It belongs to the NADPH-dependent sulphite reductase flavoprotein subunit CysJ family. The protein in the N-terminal section; belongs to the flavodoxin family. In the C-terminal section; belongs to the flavoprotein pyridine nucleotide cytochrome reductase family. As to quaternary structure, alpha(8)-beta(8). The alpha component is a flavoprotein, the beta component is a hemoprotein. The cofactor is FAD. FMN serves as cofactor.

It carries out the reaction hydrogen sulfide + 3 NADP(+) + 3 H2O = sulfite + 3 NADPH + 4 H(+). Its pathway is sulfur metabolism; hydrogen sulfide biosynthesis; hydrogen sulfide from sulfite (NADPH route): step 1/1. Functionally, component of the sulfite reductase complex that catalyzes the 6-electron reduction of sulfite to sulfide. This is one of several activities required for the biosynthesis of L-cysteine from sulfate. The flavoprotein component catalyzes the electron flow from NADPH -&gt; FAD -&gt; FMN to the hemoprotein component. The chain is Sulfite reductase [NADPH] flavoprotein alpha-component from Salmonella typhimurium (strain LT2 / SGSC1412 / ATCC 700720).